The sequence spans 275 residues: Malonyl-[acyl-carrier protein] O-methyltransferase (275 aa).

Belongs to the methyltransferase superfamily.

It carries out the reaction malonyl-[ACP] + S-adenosyl-L-methionine = malonyl-[ACP] methyl ester + S-adenosyl-L-homocysteine. It participates in cofactor biosynthesis; biotin biosynthesis. Functionally, converts the free carboxyl group of a malonyl-thioester to its methyl ester by transfer of a methyl group from S-adenosyl-L-methionine (SAM). It allows to synthesize pimeloyl-ACP via the fatty acid synthetic pathway. The sequence is that of Malonyl-[acyl-carrier protein] O-methyltransferase from Methylococcus capsulatus (strain ATCC 33009 / NCIMB 11132 / Bath).